A 595-amino-acid polypeptide reads, in one-letter code: Merlin (595 aa).

Phosphoserine is present on S13. The region spanning 22 to 311 (FTVRIVTMDA…GNHDLFMRRR (290 aa)) is the FERM domain. The residue at position 518 (S518) is a Phosphoserine; by PAK.

In terms of assembly, interacts with NHERF1, HGS and AGAP2. Interacts with SGSM3. Interacts (via FERM domain) with MPP1. Interacts with LAYN and WWC1. Interacts with the CUL4A-RBX1-DDB1-VprBP/DCAF1 E3 ubiquitin-protein ligase complex. The unphosphorylated form interacts (via FERM domain) with VPRBP/DCAF1. Interacts (via FERM domain) with NOP53; the interaction is direct. Interacts with SCHIP1; the interaction is direct. Post-translationally, phosphorylation of Ser-518 inhibits nuclear localization by disrupting the intramolecular association of the FERM domain with the C-terminal tail. Ubiquitinated by the CUL4A-RBX1-DDB1-DCAF1/VprBP E3 ubiquitin-protein ligase complex for ubiquitination and subsequent proteasome-dependent degradation. In terms of processing, phosphorylation of Ser-518 inhibits nuclear localization by disrupting the intramolecular association of the FERM domain with the C-terminal tail. The dephosphorylation of Ser-518 favors the interaction with NOP53.

It is found in the cell membrane. Its subcellular location is the cell projection. The protein resides in the cytoplasm. It localises to the cytoskeleton. The protein localises to the nucleus. Its function is as follows. Probable regulator of the Hippo/SWH (Sav/Wts/Hpo) signaling pathway, a signaling pathway that plays a pivotal role in tumor suppression by restricting proliferation and promoting apoptosis. Along with WWC1 can synergistically induce the phosphorylation of LATS1 and LATS2 and can probably function in the regulation of the Hippo/SWH (Sav/Wts/Hpo) signaling pathway. May act as a membrane stabilizing protein. May inhibit PI3 kinase by binding to AGAP2 and impairing its stimulating activity. Suppresses cell proliferation and tumorigenesis by inhibiting the CUL4A-RBX1-DDB1-VprBP/DCAF1 E3 ubiquitin-protein ligase complex. In Papio anubis (Olive baboon), this protein is Merlin (NF2).